The sequence spans 200 residues: Pyridoxal 5'-phosphate synthase subunit PdxT (200 aa).

G52 to S54 provides a ligand contact to L-glutamine. C84 acts as the Nucleophile in catalysis. L-glutamine is bound by residues R116 and I145–R146. Catalysis depends on charge relay system residues H181 and E183.

The protein belongs to the glutaminase PdxT/SNO family. In terms of assembly, in the presence of PdxS, forms a dodecamer of heterodimers. Only shows activity in the heterodimer.

The enzyme catalyses aldehydo-D-ribose 5-phosphate + D-glyceraldehyde 3-phosphate + L-glutamine = pyridoxal 5'-phosphate + L-glutamate + phosphate + 3 H2O + H(+). The catalysed reaction is L-glutamine + H2O = L-glutamate + NH4(+). The protein operates within cofactor biosynthesis; pyridoxal 5'-phosphate biosynthesis. In terms of biological role, catalyzes the hydrolysis of glutamine to glutamate and ammonia as part of the biosynthesis of pyridoxal 5'-phosphate. The resulting ammonia molecule is channeled to the active site of PdxS. This is Pyridoxal 5'-phosphate synthase subunit PdxT from Saccharolobus islandicus (strain M.16.27) (Sulfolobus islandicus).